A 164-amino-acid chain; its full sequence is Transcription antitermination protein NusB (164 aa).

The protein belongs to the NusB family.

Functionally, involved in transcription antitermination. Required for transcription of ribosomal RNA (rRNA) genes. Binds specifically to the boxA antiterminator sequence of the ribosomal RNA (rrn) operons. The sequence is that of Transcription antitermination protein NusB from Chlamydia muridarum (strain MoPn / Nigg).